We begin with the raw amino-acid sequence, 1735 residues long: Glutamine and serine-rich protein 1 (1735 aa).

Methionine 1 carries the post-translational modification N-acetylmethionine. Residues alanine 267–proline 297 show a composition bias toward polar residues. 4 disordered regions span residues alanine 267–isoleucine 301, threonine 414–threonine 440, serine 479–alanine 518, and leucine 533–glutamate 561. The span at leucine 417–threonine 440 shows a compositional bias: low complexity. Phosphoserine occurs at positions 586, 615, and 886. Threonine 949 carries the post-translational modification Phosphothreonine. The tract at residues glycine 964–glycine 1033 is disordered. Positions glutamate 971–leucine 985 are enriched in polar residues. Phosphoserine is present on serine 987. Residues serine 997–glutamate 1024 show a composition bias toward polar residues. Residues lysine 1058 and lysine 1083 each participate in a glycyl lysine isopeptide (Lys-Gly) (interchain with G-Cter in SUMO2) cross-link. Disordered regions lie at residues lysine 1073–arginine 1132 and arginine 1178–aspartate 1217. The segment covering serine 1120 to arginine 1132 has biased composition (basic and acidic residues). A phosphoserine mark is found at serine 1211, serine 1230, serine 1231, and serine 1239. Residues threonine 1256 to threonine 1286 form a disordered region. Residues alanine 1269–threonine 1286 are compositionally biased toward low complexity. Threonine 1341 is subject to Phosphothreonine. Position 1348 is a phosphoserine (serine 1348). Positions valine 1441–proline 1532 are disordered. Residues lysine 1449–threonine 1478 are compositionally biased toward polar residues. The segment covering valine 1492 to phenylalanine 1508 has biased composition (basic and acidic residues).

In terms of assembly, interacts with TET1.

It localises to the chromosome. In terms of biological role, plays an essential role in the protection and maintenance of transcriptional and developmental programs. Protects many bivalent promoters and poised enhancers from hypermethylation, showing a marked preference for these regulatory elements over other types of promoters or enhancers. Mechanistically, cooperates with TET1 and binds to DNA in a common complex to inhibit the binding of DNMT3A/3B and therefore de novo methylation. In Homo sapiens (Human), this protein is Glutamine and serine-rich protein 1 (QSER1).